Consider the following 245-residue polypeptide: 1-(5-phosphoribosyl)-5-[(5-phosphoribosylamino)methylideneamino] imidazole-4-carboxamide isomerase (245 aa).

Asp-7 serves as the catalytic Proton acceptor. Asp-129 (proton donor) is an active-site residue.

The protein belongs to the HisA/HisF family.

The protein localises to the cytoplasm. The catalysed reaction is 1-(5-phospho-beta-D-ribosyl)-5-[(5-phospho-beta-D-ribosylamino)methylideneamino]imidazole-4-carboxamide = 5-[(5-phospho-1-deoxy-D-ribulos-1-ylimino)methylamino]-1-(5-phospho-beta-D-ribosyl)imidazole-4-carboxamide. Its pathway is amino-acid biosynthesis; L-histidine biosynthesis; L-histidine from 5-phospho-alpha-D-ribose 1-diphosphate: step 4/9. The polypeptide is 1-(5-phosphoribosyl)-5-[(5-phosphoribosylamino)methylideneamino] imidazole-4-carboxamide isomerase (Shewanella amazonensis (strain ATCC BAA-1098 / SB2B)).